Here is a 177-residue protein sequence, read N- to C-terminus: Ecotin (177 aa).

Residues 1 to 23 form the signal peptide; that stretch reads MQASIQNRIFFGLVVLWSTTVLE. A disulfide bridge connects residues Cys83 and Cys122.

It belongs to the protease inhibitor I11 (ecotin) family. As to quaternary structure, homodimer.

Its subcellular location is the periplasm. Its function is as follows. General inhibitor of family S1 serine proteases. In Prochlorococcus marinus (strain MIT 9313), this protein is Ecotin.